The following is a 754-amino-acid chain: Ubiquitin carboxyl-terminal hydrolase 9 (754 aa).

Positions 1–14 (MIKRWLSVNRKKSH) are enriched in basic residues. The tract at residues 1–76 (MIKRWLSVNR…SKFSSQTDNL (76 aa)) is disordered. Residues 42-58 (SIAKSPSAKSSTSSIPS) show a composition bias toward low complexity. Positions 134 to 667 (FGYENFGNTC…TAYVLFYKET (534 aa)) constitute a USP domain. The active-site Nucleophile is cysteine 143. Residues 194–209 (ETSTNSGNSNTGYQSN) show a composition bias toward polar residues. The disordered stretch occupies residues 194 to 273 (ETSTNSGNSN…DNNEMERPQP (80 aa)). Positions 222–233 (QSDQDNSSSSTQ) are enriched in low complexity. The segment covering 250–272 (GKDKSNYKDSAKKDDNNEMERPQ) has biased composition (basic and acidic residues). Histidine 618 serves as the catalytic Proton acceptor. The segment at 726 to 754 (VKTAETKTPLNDKKRNKQKRKSRILSFIK) is disordered. Residues 727-738 (KTAETKTPLNDK) are compositionally biased toward basic and acidic residues. The segment covering 739 to 748 (KRNKQKRKSR) has biased composition (basic residues).

It belongs to the peptidase C19 family.

The catalysed reaction is Thiol-dependent hydrolysis of ester, thioester, amide, peptide and isopeptide bonds formed by the C-terminal Gly of ubiquitin (a 76-residue protein attached to proteins as an intracellular targeting signal).. This Saccharomyces cerevisiae (strain ATCC 204508 / S288c) (Baker's yeast) protein is Ubiquitin carboxyl-terminal hydrolase 9 (UBP9).